We begin with the raw amino-acid sequence, 284 residues long: 2,3,4,5-tetrahydropyridine-2,6-dicarboxylate N-succinyltransferase (284 aa).

Arg111 and Asp148 together coordinate substrate.

It belongs to the transferase hexapeptide repeat family. As to quaternary structure, homotrimer.

The protein localises to the cytoplasm. It catalyses the reaction (S)-2,3,4,5-tetrahydrodipicolinate + succinyl-CoA + H2O = (S)-2-succinylamino-6-oxoheptanedioate + CoA. The protein operates within amino-acid biosynthesis; L-lysine biosynthesis via DAP pathway; LL-2,6-diaminopimelate from (S)-tetrahydrodipicolinate (succinylase route): step 1/3. This Mesorhizobium japonicum (strain LMG 29417 / CECT 9101 / MAFF 303099) (Mesorhizobium loti (strain MAFF 303099)) protein is 2,3,4,5-tetrahydropyridine-2,6-dicarboxylate N-succinyltransferase.